The primary structure comprises 239 residues: MIELIPAIDIIDGKCVRLSQGDYNTQKVYNENPVEVAKEFEAHGIHRLHIVDLDGAVSRHVVNYRVLDQIASRTSLVIDFGGGIKTDEDLVIAFDNGAQMVTLGSVAVKNPGLFKKWLEQYGNEKIILGADVKENKISVNGWKEESQQQLIPFLKDYTKEGVFKVLCTDISRDGMLQGPSVELYQQILKEFPNMHLIASGGVSCIQDIIDLEIAKVPAVVFGKALYEGKITLKDLNRFM.

The Proton acceptor role is filled by Asp-9. Catalysis depends on Asp-131, which acts as the Proton donor.

This sequence belongs to the HisA/HisF family.

It is found in the cytoplasm. It carries out the reaction 1-(5-phospho-beta-D-ribosyl)-5-[(5-phospho-beta-D-ribosylamino)methylideneamino]imidazole-4-carboxamide = 5-[(5-phospho-1-deoxy-D-ribulos-1-ylimino)methylamino]-1-(5-phospho-beta-D-ribosyl)imidazole-4-carboxamide. It participates in amino-acid biosynthesis; L-histidine biosynthesis; L-histidine from 5-phospho-alpha-D-ribose 1-diphosphate: step 4/9. The polypeptide is 1-(5-phosphoribosyl)-5-[(5-phosphoribosylamino)methylideneamino] imidazole-4-carboxamide isomerase (Phocaeicola vulgatus (strain ATCC 8482 / DSM 1447 / JCM 5826 / CCUG 4940 / NBRC 14291 / NCTC 11154) (Bacteroides vulgatus)).